The chain runs to 307 residues: Undecaprenyl-diphosphatase (307 aa).

6 helical membrane passes run 40–60 (AAKTLDIVIQLGAVLAVVVYF), 79–99 (LRLALALAFAFLPAAVVGLLF), 107–127 (LFGPGPVAAALIVGGFLMIGV), 183–203 (AAAAEFSFLLAIPTLGAATVF), 219–239 (IVALVVGLAVSFAVALLVIAV), and 249–269 (LAPFGWYRIALGALVLWLWIA).

This sequence belongs to the UppP family.

It localises to the cell inner membrane. It carries out the reaction di-trans,octa-cis-undecaprenyl diphosphate + H2O = di-trans,octa-cis-undecaprenyl phosphate + phosphate + H(+). Catalyzes the dephosphorylation of undecaprenyl diphosphate (UPP). Confers resistance to bacitracin. The polypeptide is Undecaprenyl-diphosphatase (Sorangium cellulosum (strain So ce56) (Polyangium cellulosum (strain So ce56))).